Reading from the N-terminus, the 463-residue chain is ATP-dependent rRNA helicase SPB4 (463 aa).

The short motif at 4-32 (KGIEDVAMNGRLKKEIEENGFGKMTEVQL) is the Q motif element. Residues 35 to 205 (IPEVLKGKDV…RVFLRNPVSI (171 aa)) form the Helicase ATP-binding domain. 48–55 (SPTGTGKT) is an ATP binding site. The DEAD box signature appears at 153-156 (DEAD). The 157-residue stretch at 226-382 (KLLVLMDIVT…DIKSMISPEL (157 aa)) folds into the Helicase C-terminal domain. Positions 444-463 (RDGKKRALPKKKYRKKRAIK) are disordered. Basic residues predominate over residues 446 to 463 (GKKRALPKKKYRKKRAIK).

This sequence belongs to the DEAD box helicase family. DDX55/SPB4 subfamily. In terms of assembly, component of pre-60S ribosomal complexes.

The protein localises to the nucleus. It is found in the nucleolus. The catalysed reaction is ATP + H2O = ADP + phosphate + H(+). ATP-binding RNA helicase involved in the biogenesis of 60S ribosomal subunits. Binds 90S pre-ribosomal particles and dissociates from pre-60S ribosomal particles after processing of 27SB pre-rRNA. Required for the normal formation of 18S rRNA through the processing of pre-rRNAs at sites A0, A1 and A2, and the normal formation of 25S and 5.8S rRNAs through the processing of pre-rRNAs at sites C1 and C2. In Encephalitozoon cuniculi (strain GB-M1) (Microsporidian parasite), this protein is ATP-dependent rRNA helicase SPB4.